A 380-amino-acid polypeptide reads, in one-letter code: Queuine tRNA-ribosyltransferase (380 aa).

Residue Asp95 is the Proton acceptor of the active site. Residues 95–99 (DSGGF), Asp149, Gln192, and Gly219 contribute to the substrate site. The tract at residues 250-256 (GVGSPDA) is RNA binding. The Nucleophile role is filled by Asp269. Positions 274-278 (TRIAR) are RNA binding; important for wobble base 34 recognition. Positions 307, 309, 312, and 338 each coordinate Zn(2+).

The protein belongs to the queuine tRNA-ribosyltransferase family. In terms of assembly, homodimer. Within each dimer, one monomer is responsible for RNA recognition and catalysis, while the other monomer binds to the replacement base PreQ1. Zn(2+) is required as a cofactor.

It carries out the reaction 7-aminomethyl-7-carbaguanine + guanosine(34) in tRNA = 7-aminomethyl-7-carbaguanosine(34) in tRNA + guanine. The protein operates within tRNA modification; tRNA-queuosine biosynthesis. Functionally, catalyzes the base-exchange of a guanine (G) residue with the queuine precursor 7-aminomethyl-7-deazaguanine (PreQ1) at position 34 (anticodon wobble position) in tRNAs with GU(N) anticodons (tRNA-Asp, -Asn, -His and -Tyr). Catalysis occurs through a double-displacement mechanism. The nucleophile active site attacks the C1' of nucleotide 34 to detach the guanine base from the RNA, forming a covalent enzyme-RNA intermediate. The proton acceptor active site deprotonates the incoming PreQ1, allowing a nucleophilic attack on the C1' of the ribose to form the product. After dissociation, two additional enzymatic reactions on the tRNA convert PreQ1 to queuine (Q), resulting in the hypermodified nucleoside queuosine (7-(((4,5-cis-dihydroxy-2-cyclopenten-1-yl)amino)methyl)-7-deazaguanosine). This chain is Queuine tRNA-ribosyltransferase, found in Latilactobacillus sakei subsp. sakei (strain 23K) (Lactobacillus sakei subsp. sakei).